The sequence spans 329 residues: MSAYIIETLIKILILVAVFSALGGFATYIERKVLAYFQRRLGPCYVGPFGLLQVAADGIKLFTKEDIIPQGANKFIFTLAPIIAMVSAFVSMAPIPFFPNFTLFGYEIKPLISDINIGFLFFLAVGAAGIYAPILAGLASNNKYSLIGSARATIQLLSFEVVSTLTILAPLMVVGSLSLVEINHYQSGGFLDWLVFKQPLAFVLFLIASYAELNRTPFDLLEHEAEIVAGYCTEYSGLKWGMFFLAEYAHLFAFSFVISIVFFGGFNAWGFIPGGIAILIKAGFFVFLSMWVRATYPHVRPDQLMNMCWKIMLPLALLNIVLTGIIILI.

9 helical membrane passes run 9–29 (LIKI…ATYI), 42–62 (GPCY…IKLF), 75–95 (FIFT…MAPI), 117–137 (IGFL…ILAG), 154–174 (IQLL…LMVV), 188–208 (GGFL…FLIA), 238–258 (LKWG…SFVI), 269–291 (WGFI…LSMW), and 309–329 (WKIM…IILI).

It belongs to the complex I subunit 1 family. As to quaternary structure, NDH-1 is composed of 14 different subunits. Subunits NuoA, H, J, K, L, M, N constitute the membrane sector of the complex.

Its subcellular location is the cell inner membrane. It catalyses the reaction a quinone + NADH + 5 H(+)(in) = a quinol + NAD(+) + 4 H(+)(out). Its function is as follows. NDH-1 shuttles electrons from NADH, via FMN and iron-sulfur (Fe-S) centers, to quinones in the respiratory chain. The immediate electron acceptor for the enzyme in this species is believed to be ubiquinone. Couples the redox reaction to proton translocation (for every two electrons transferred, four hydrogen ions are translocated across the cytoplasmic membrane), and thus conserves the redox energy in a proton gradient. This subunit may bind ubiquinone. This is NADH-quinone oxidoreductase subunit H from Helicobacter pylori (strain HPAG1).